The following is a 260-amino-acid chain: Isoprenyl transferase (260 aa).

Aspartate 38 is a catalytic residue. Aspartate 38 contacts Mg(2+). Residues 39 to 42, tryptophan 43, arginine 51, histidine 55, and 83 to 85 contribute to the substrate site; these read GNGR and STE. Catalysis depends on asparagine 86, which acts as the Proton acceptor. Residues tryptophan 87, arginine 89, arginine 206, and 212–214 contribute to the substrate site; that span reads RLS. Glutamate 225 provides a ligand contact to Mg(2+).

The protein belongs to the UPP synthase family. In terms of assembly, homodimer. Requires Mg(2+) as cofactor.

Catalyzes the condensation of isopentenyl diphosphate (IPP) with allylic pyrophosphates generating different type of terpenoids. In Heliobacterium mobile (Heliobacillus mobilis), this protein is Isoprenyl transferase.